A 129-amino-acid chain; its full sequence is Ribosome-binding factor A (129 aa).

Belongs to the RbfA family. In terms of assembly, monomer. Binds 30S ribosomal subunits, but not 50S ribosomal subunits or 70S ribosomes.

Its subcellular location is the cytoplasm. Its function is as follows. One of several proteins that assist in the late maturation steps of the functional core of the 30S ribosomal subunit. Associates with free 30S ribosomal subunits (but not with 30S subunits that are part of 70S ribosomes or polysomes). Required for efficient processing of 16S rRNA. May interact with the 5'-terminal helix region of 16S rRNA. In Gloeobacter violaceus (strain ATCC 29082 / PCC 7421), this protein is Ribosome-binding factor A.